The primary structure comprises 302 residues: uncharacterized protein (302 aa).

10 consecutive transmembrane segments (helical) span residues 13–32 (GILL…IYFK), 42–64 (ILSH…GRRW), 77–96 (FWLL…IFIW), 106–125 (ASLG…MLFL), 132–150 (LQWF…QLVV), 154–171 (VPIV…YGLL), 183–202 (LFLE…IWLA), 217–239 (NLLL…GAAA), 246–265 (LGFF…VLVY), and 275–297 (ITFA…AGHA). Positions 22-149 (TMWGIAPIYF…AAIGVGIQLV (128 aa)) constitute an EamA domain.

The protein belongs to the EamA transporter family.

It localises to the cell membrane. This is an uncharacterized protein from Vibrio cholerae serotype O1 (strain ATCC 39315 / El Tor Inaba N16961).